The following is a 307-amino-acid chain: sn-1-specific diacylglycerol lipase ABHD11 (307 aa).

A mitochondrion-targeting transit peptide spans 1–34 (MLRWARAWRVPRGVLGASSPRRLAVPVTFCSSRS). An N6-succinyllysine modification is found at lysine 79. The active-site Charge relay system is the serine 133. At lysine 196 the chain carries N6-succinyllysine. Residues aspartate 229 and histidine 288 each act as charge relay system in the active site.

The protein belongs to the AB hydrolase superfamily. Interacts with OGDH and DLST; this interaction maintains the functional lipoylation of the 2-oxoglutarate dehydrogenase complex. Post-translationally, phosphorylated. In terms of tissue distribution, expressed in white adipose tissues.

It is found in the mitochondrion. The protein resides in the mitochondrion matrix. The catalysed reaction is 1-octadecanoyl-2-(5Z,8Z,11Z,14Z-eicosatetraenoyl)-sn-glycerol + H2O = 2-(5Z,8Z,11Z,14Z-eicosatetraenoyl)-glycerol + octadecanoate + H(+). The enzyme catalyses a 1,2-diacyl-sn-glycerol + H2O = a 2-acylglycerol + a fatty acid + H(+). It catalyses the reaction a 1,3-diacyl-sn-glycerol + H2O = a 1-acyl-sn-glycerol + a fatty acid + H(+). It carries out the reaction 1-octadecanoyl-2-(9Z-octadecenoyl)-sn-glycerol + H2O = 2-(9Z-octadecenoyl)-glycerol + octadecanoate + H(+). The catalysed reaction is 1-octadecanoyl-2-(4Z,7Z,10Z,13Z,16Z,19Z-docosahexaenoyl)-sn-glycerol + H2O = 2-(4Z,7Z,10Z,13Z,16Z,19Z-docosahexaenoyl)-glycerol + octadecanoate + H(+). The enzyme catalyses 1,2-didecanoylglycerol + H2O = decanoylglycerol + decanoate + H(+). Functionally, catalyzes the hydrolysis of diacylglycerol in vitro and may function as a key regulator in lipid metabolism, namely by regulating the intracellular levels of diacylglycerol. 1,2-diacyl-sn-glycerols are the preferred substrate over 1,3-diacyl-sn-glycerols. The enzyme hydrolyzes stearate in preference to palmitate from the sn-1 position of 1,2-diacyl-sn-glycerols. Maintains the functional lipoylation of the 2-oxoglutarate dehydrogenase complex (OGDHc) through its interaction with the OGDHc by preventing the formation of lipoyl adducts. In addition, is also required for the expansion and differentiation of embryonic stem cells (ESCs). This chain is sn-1-specific diacylglycerol lipase ABHD11, found in Mus musculus (Mouse).